Reading from the N-terminus, the 81-residue chain is MNQEIFEKVKSIVVEQLEVEEDTVTPEANFANDLGADSLDTVELVMALEEEFDIEIPDEAAENIGTVQAAVDYIEKEQAKA.

Positions 3–78 constitute a Carrier domain; it reads QEIFEKVKSI…AAVDYIEKEQ (76 aa). An O-(pantetheine 4'-phosphoryl)serine modification is found at serine 38.

This sequence belongs to the acyl carrier protein (ACP) family. In terms of processing, 4'-phosphopantetheine is transferred from CoA to a specific serine of apo-ACP by AcpS. This modification is essential for activity because fatty acids are bound in thioester linkage to the sulfhydryl of the prosthetic group.

Its subcellular location is the cytoplasm. The protein operates within lipid metabolism; fatty acid biosynthesis. Functionally, carrier of the growing fatty acid chain in fatty acid biosynthesis. The protein is Acyl carrier protein of Crocosphaera subtropica (strain ATCC 51142 / BH68) (Cyanothece sp. (strain ATCC 51142)).